Consider the following 214-residue polypeptide: MQEFLATSERRAELYWWFATLFSAELSDKQIAEYDSYDVRSFLKSLSTLDPMRPAVTELNEAIARLLVRDERATALAADFKGLFLADTAVQPYESAHLDASSLGRMQQRLVRLAIDVSAKYPQPVDHLGVELDLMGNLIIRAAEAPSADQREQWLGEQEAVLHGHLLAWFPHFEVACRAADPFGFYGASARLLGVFLTMDANYLSLVKPASSAD.

This sequence belongs to the TorD/DmsD family. TorD subfamily.

The protein resides in the cytoplasm. In terms of biological role, involved in the biogenesis of TorA. Acts on TorA before the insertion of the molybdenum cofactor and, as a result, probably favors a conformation of the apoenzyme that is competent for acquiring the cofactor. In Aeromonas salmonicida (strain A449), this protein is Chaperone protein TorD.